Consider the following 401-residue polypeptide: Phosphoglycerate kinase, cytosolic (401 aa).

Positions 24, 25, 27, 41, 63, 64, 66, 67, 122, 154, and 155 each coordinate (2R)-3-phosphoglycerate. G200 is an ADP binding site. G200 contacts CDP. Residues K202 and K206 each contribute to the AMP site. K206 provides a ligand contact to ATP. An ADP-binding site is contributed by G224. Residue G224 participates in CDP binding. G225 and G297 together coordinate AMP. Residues G225 and G297 each coordinate ATP. CDP-binding residues include G322 and F327. F327 contributes to the ADP binding site. E328 serves as a coordination point for AMP. Positions 328, 359, and 360 each coordinate ATP. A Mg(2+)-binding site is contributed by D359.

The protein belongs to the phosphoglycerate kinase family. As to quaternary structure, monomer. Mg(2+) serves as cofactor.

Its subcellular location is the cytoplasm. It catalyses the reaction (2R)-3-phosphoglycerate + ATP = (2R)-3-phospho-glyceroyl phosphate + ADP. Its pathway is carbohydrate degradation; glycolysis; pyruvate from D-glyceraldehyde 3-phosphate: step 2/5. This chain is Phosphoglycerate kinase, cytosolic, found in Triticum aestivum (Wheat).